We begin with the raw amino-acid sequence, 367 residues long: tRNA-specific 2-thiouridylase MnmA (367 aa).

Residues 12 to 19 and Met-38 contribute to the ATP site; that span reads GMSGGVDS. An interaction with target base in tRNA region spans residues 98–100; the sequence is NPD. Catalysis depends on Cys-103, which acts as the Nucleophile. Residues Cys-103 and Cys-200 are joined by a disulfide bond. Gly-128 is a binding site for ATP. The tract at residues 150–152 is interaction with tRNA; that stretch reads KDQ. Cys-200 serves as the catalytic Cysteine persulfide intermediate. An interaction with tRNA region spans residues 312–313; that stretch reads RY.

Belongs to the MnmA/TRMU family. Interacts with TusE.

It localises to the cytoplasm. It catalyses the reaction S-sulfanyl-L-cysteinyl-[protein] + uridine(34) in tRNA + AH2 + ATP = 2-thiouridine(34) in tRNA + L-cysteinyl-[protein] + A + AMP + diphosphate + H(+). Catalyzes the 2-thiolation of uridine at the wobble position (U34) of tRNA(Lys), tRNA(Glu) and tRNA(Gln), leading to the formation of s(2)U34, the first step of tRNA-mnm(5)s(2)U34 synthesis. Sulfur is provided by IscS, via a sulfur-relay system. Binds ATP and its substrate tRNAs. The chain is tRNA-specific 2-thiouridylase MnmA from Blochmanniella pennsylvanica (strain BPEN).